Consider the following 536-residue polypeptide: Enterobactin synthase component E (536 aa).

Substrate-binding residues include asparagine 235, serine 240, glycine 309, valine 331, alanine 335, aspartate 415, and lysine 432. The segment at 438–439 (GG) is phosphopantetheine binding. Lysine 441 serves as a coordination point for substrate.

The protein belongs to the ATP-dependent AMP-binding enzyme family. EntE subfamily. In terms of assembly, proteins EntB, EntD, EntE, and EntF form a multienzyme complex called enterobactin synthase. Monomer. EntA and EntE interact together.

The protein localises to the membrane. The catalysed reaction is 3 2,3-dihydroxybenzoate + 3 L-serine + 6 ATP = enterobactin + 6 AMP + 6 diphosphate + 4 H(+). It catalyses the reaction 2,3-dihydroxybenzoate + holo-[ACP] + ATP = 2,3-dihydroxybenzoyl-[ACP] + AMP + diphosphate. The enzyme catalyses 2,3-dihydroxybenzoyl-5'-AMP + holo-[ACP] = 2,3-dihydroxybenzoyl-[ACP] + AMP + H(+). Its pathway is siderophore biosynthesis; enterobactin biosynthesis. Its activity is regulated as follows. Inhibited by the adenylate analogs, 5'-O-[N-(salicyl)sulfamoyl]adenosine (Sal-AMS) and 5'-O-[N-(2,3-dihydroxybenzoyl)sulfamoyl]adenosine (DHB-AMS). Adenylation of 2,3-dihydroxybenzoate (DHB) is enhanced by a protein-protein interaction between the EntA and EntE. Functionally, involved in the biosynthesis of the siderophore enterobactin (enterochelin), which is a macrocyclic trimeric lactone of N-(2,3-dihydroxybenzoyl)-serine. The serine trilactone serves as a scaffolding for the three catechol functionalities that provide hexadentate coordination for the tightly ligated iron(2+) atoms. EntE processes via a two-step adenylation-ligation reaction (bi-uni-uni-bi ping-pong mechanism). First, it catalyzes the activation of the carboxylate group of 2,3-dihydroxy-benzoate (DHB), via a reversible ATP-dependent pyrophosphate exchange reactions to yield the acyladenylate intermediate 2,3-dihydroxybenzoyl-AMP. It can also transfer AMP to salicylate, 2,4-dihydroxybenzoate, gentisate and 2,3,4-trihydroxybenzoate. In the second step, DHB is transferred from 2,3-dihydroxybenzoyl-AMP onto the phosphopantetheinylated EntB (holo-EntB) to form DHB-holo-EntB. Then this product will serve in the formation of the amide bond between 2,3-dihydroxybenzoate (DHB) and L-serine. It can also transfer adenylated salicylate to holo-EntB. This chain is Enterobactin synthase component E, found in Escherichia coli (strain K12).